The chain runs to 203 residues: Small ribosomal subunit protein uS2 (203 aa).

Belongs to the universal ribosomal protein uS2 family.

This is Small ribosomal subunit protein uS2 from Methanopyrus kandleri (strain AV19 / DSM 6324 / JCM 9639 / NBRC 100938).